The chain runs to 310 residues: MEPQNTTQVSMFVLLGFSQTQELQKFLFLLFLLVYVTTIVGNLLIMVTVTFDCRLHTPMYFLLRNLALIDLCYSTVTSPKMLVDFLHETKTISYQGCMAQIFFFHLLGGGTVFFLSVMAYDRYIAISQPLRYVTIMNTQLCVGLVVAAWVGGFVHSIVQLALILPLPFCGPNILDNFYCDVPQVLRLACTDTSLLEFLMISNSGLLVIIWFLLLLISYTVILVMLRSHSGKARRKAASTCTTHIIVVSMIFIPCIYIYTWPFTPFLMDKAVSISYTVMTPMLNPMIYTLRNQDMKAAMRRLGKCLVICRE.

The Extracellular segment spans residues 1-25 (MEPQNTTQVSMFVLLGFSQTQELQK). A glycan (N-linked (GlcNAc...) asparagine) is linked at N5. Residues 26-49 (FLFLLFLLVYVTTIVGNLLIMVTV) traverse the membrane as a helical segment. The Cytoplasmic segment spans residues 50–57 (TFDCRLHT). Residues 58–79 (PMYFLLRNLALIDLCYSTVTSP) traverse the membrane as a helical segment. Residues 80–100 (KMLVDFLHETKTISYQGCMAQ) are Extracellular-facing. C97 and C189 are disulfide-bonded. Residues 101 to 120 (IFFFHLLGGGTVFFLSVMAY) traverse the membrane as a helical segment. Topologically, residues 121–139 (DRYIAISQPLRYVTIMNTQ) are cytoplasmic. The helical transmembrane segment at 140–158 (LCVGLVVAAWVGGFVHSIV) threads the bilayer. The Extracellular portion of the chain corresponds to 159–195 (QLALILPLPFCGPNILDNFYCDVPQVLRLACTDTSLL). Residues 196-219 (EFLMISNSGLLVIIWFLLLLISYT) form a helical membrane-spanning segment. At 220–235 (VILVMLRSHSGKARRK) the chain is on the cytoplasmic side. The helical transmembrane segment at 236–258 (AASTCTTHIIVVSMIFIPCIYIY) threads the bilayer. Topologically, residues 259-269 (TWPFTPFLMDK) are extracellular. A helical transmembrane segment spans residues 270–289 (AVSISYTVMTPMLNPMIYTL). Over 290 to 310 (RNQDMKAAMRRLGKCLVICRE) the chain is Cytoplasmic.

This sequence belongs to the G-protein coupled receptor 1 family.

The protein localises to the cell membrane. Odorant receptor. This Homo sapiens (Human) protein is Olfactory receptor 4D1 (OR4D1).